The primary structure comprises 556 residues: Polyphenol oxidase 2 (556 aa).

Residues histidine 57, histidine 81, histidine 90, histidine 250, histidine 254, and histidine 282 each coordinate Cu cation. A cross-link (2'-(S-cysteinyl)-histidine (Cys-His)) is located at residues 79 to 81 (CTH). A substrate-binding site is contributed by histidine 254. Positions 379 to 556 (SKPSSGARNT…FDDVAVHVIN (178 aa)) are cleaved as a propeptide — removed in mature form.

The protein belongs to the tyrosinase family. In terms of assembly, heterotetramer. Requires Cu(2+) as cofactor. The C-ter is probably cleaved after Gly-378 since the mature active protein is smaller than the protein encoded by the gene.

It catalyses the reaction 2 L-dopa + O2 = 2 L-dopaquinone + 2 H2O. The catalysed reaction is L-tyrosine + O2 = L-dopaquinone + H2O. Functionally, copper-containing oxidase that catalyzes both the o-hydroxylation of monophenols and the subsequent oxidation of the resulting o-diphenols into reactive o-quinones, which evolve spontaneously to produce intermediates, which associate in dark brown pigments. Involved in the initial step of melanin synthesis. Melanins constitute a mechanism of defense and resistance to stress such as UV radiations, free radicals, gamma rays, dehydratation and extreme temperatures, and contribute to the fungal cell-wall resistance against hydrolytic enzymes in avoiding cellular lysis. Fungal pigments are also involved in the formation and stability of spores. This chain is Polyphenol oxidase 2 (PPO2), found in Agaricus bisporus (White button mushroom).